The sequence spans 491 residues: UDP-N-acetylmuramate--L-alanine ligase (491 aa).

126–132 (GTHGKTT) provides a ligand contact to ATP.

This sequence belongs to the MurCDEF family.

The protein resides in the cytoplasm. The catalysed reaction is UDP-N-acetyl-alpha-D-muramate + L-alanine + ATP = UDP-N-acetyl-alpha-D-muramoyl-L-alanine + ADP + phosphate + H(+). The protein operates within cell wall biogenesis; peptidoglycan biosynthesis. Its function is as follows. Cell wall formation. The chain is UDP-N-acetylmuramate--L-alanine ligase from Escherichia coli O7:K1 (strain IAI39 / ExPEC).